The primary structure comprises 313 residues: MPIRIPDQLPASDVLRTENIFVMSETRAASQEIRPLRVLILNLMPKKIETETQFLRLLSNSPLQVNVELLRIDNRPSKNTPTEHLDTFYRQFEMVKGKNFDGLIITGAPLGLVQFEDVIYWDHLKTIMEWAKDHVTSTLYVCWAAQAGLKLLYDLPKKTRKEKLSGVYHHQIHNPFHPILRGFDDTFLAPHSRYADFSPHFLEEHTDLDILATSDVAGVYLATTKDKRNVFVTGHPEYDSHTLHNEYIRDLGEGMEPAIPVNYYPNNNPDNPPIASWRSHGHLLFLNWLNYCVYQQTPYDLDHFSEDAFTKDD.

The active-site Acyl-thioester intermediate is the C142. The substrate site is built by K163 and S192. Catalysis depends on H235, which acts as the Proton acceptor. Residue E237 is part of the active site. R249 is a binding site for substrate.

Belongs to the MetA family.

It is found in the cytoplasm. The enzyme catalyses L-homoserine + succinyl-CoA = O-succinyl-L-homoserine + CoA. It functions in the pathway amino-acid biosynthesis; L-methionine biosynthesis via de novo pathway; O-succinyl-L-homoserine from L-homoserine: step 1/1. Its function is as follows. Transfers a succinyl group from succinyl-CoA to L-homoserine, forming succinyl-L-homoserine. The sequence is that of Homoserine O-succinyltransferase from Vibrio parahaemolyticus serotype O3:K6 (strain RIMD 2210633).